A 24-amino-acid chain; its full sequence is Bombinin (24 aa).

At Asn24 the chain carries Asparagine amide.

This sequence belongs to the bombinin family. Expressed by the skin glands.

It localises to the secreted. Has antimicrobial and hemolytic activities. In Bombina variegata (Yellow-bellied toad), this protein is Bombinin.